The sequence spans 592 residues: Protein kinase C zeta type (592 aa).

Residues arginine 15 to serine 98 enclose the PB1 domain. The tract at residues alanine 79–glycine 145 is interaction with SQSTM1. The Phorbol-ester/DAG-type zinc finger occupies glycine 130 to cysteine 180. The Protein kinase domain maps to phenylalanine 252–phenylalanine 518. ATP-binding positions include isoleucine 258–valine 266 and lysine 281. Aspartate 376 functions as the Proton acceptor in the catalytic mechanism. Threonine 410 carries the phosphothreonine; by PDPK1 and PI3K modification. The AGC-kinase C-terminal domain maps to arginine 519 to glutamate 590. Phosphothreonine is present on threonine 560. Serine 591 bears the Phosphoserine mark.

Belongs to the protein kinase superfamily. AGC Ser/Thr protein kinase family. PKC subfamily. Interacts directly with SQSTM1. Forms a ternary complex with SQSTM1 and KCNAB2. Forms another ternary complex with SQSTM1 and GABRR3. Forms a complex with SQSTM1 and MAP2K5. Interacts with PARD6A, PARD6B and PARD6G. Part of a complex with PARD3, PARD6A or PARD6B or PARD6G and CDC42 or RAC1. Interacts with ADAP1/CENTA1. Interacts (via the protein kinase domain) with WWC1. Forms a tripartite complex with WWC1 and DDR1, but predominantly in the absence of collagen. Interacts with PDPK1 (via N-terminal region). Interacts with WDFY2 (via WD repeats 1-3). Interacts with VAMP2. Forms a complex with WDFY2 and VAMP2. Interacts with APPL1. Interacts with WWC1, WWC2 and WWC3. CDH5 is required for its phosphorylation at Thr-410. Phosphorylated by protein kinase PDPK1; phosphorylation is inhibited by the apoptotic C-terminal cleavage product of PKN2. Phosphorylation at Thr-410 by PI3K activates the kinase. In terms of tissue distribution, isoform 1: In brain, highly expressed in cerebellar granule neurons and cerebellar astrocytes (at protein level). Expressed at low levels in testes, lung and kidney. Isoform 2: Specifically expressed in brain where it localizes to cerebellar granule neurons (at protein level).

Its subcellular location is the cytoplasm. The protein resides in the endosome. It is found in the cell junction. It localises to the membrane. It catalyses the reaction L-seryl-[protein] + ATP = O-phospho-L-seryl-[protein] + ADP + H(+). The enzyme catalyses L-threonyl-[protein] + ATP = O-phospho-L-threonyl-[protein] + ADP + H(+). Its activity is regulated as follows. Atypical PKCs (PRKCI and PRKCZ) exhibit an elevated basal enzymatic activity (that may be due to the interaction with SMG1 or SQSTM1) and are not regulated by diacylglycerol, phosphatidylserine, phorbol esters or calcium ions. Two specific sites, Thr-410 (activation loop of the kinase domain) and Thr-560 (turn motif), need to be phosphorylated for its full activation. Phosphatidylinositol 3,4,5-trisphosphate might be a physiological activator. Isoform 2: Constitutively active. In terms of biological role, calcium- and diacylglycerol-independent serine/threonine-protein kinase that functions in phosphatidylinositol 3-kinase (PI3K) pathway and mitogen-activated protein (MAP) kinase cascade, and is involved in NF-kappa-B activation, mitogenic signaling, cell proliferation, cell polarity, inflammatory response and maintenance of long-term potentiation (LTP). Upon lipopolysaccharide (LPS) treatment in macrophages, or following mitogenic stimuli, functions downstream of PI3K to activate MAP2K1/MEK1-MAPK1/ERK2 signaling cascade independently of RAF1 activation. Required for insulin-dependent activation of AKT3, but may function as an adapter rather than a direct activator. Upon insulin treatment may act as a downstream effector of PI3K and contribute to the activation of translocation of the glucose transporter SLC2A4/GLUT4 and subsequent glucose transport in adipocytes. In EGF-induced cells, binds and activates MAP2K5/MEK5-MAPK7/ERK5 independently of its kinase activity and can activate JUN promoter through MEF2C. Through binding with SQSTM1/p62, functions in interleukin-1 signaling and activation of NF-kappa-B with the specific adapters RIPK1 and TRAF6. Participates in TNF-dependent transactivation of NF-kappa-B by phosphorylating and activating IKBKB kinase, which in turn leads to the degradation of NF-kappa-B inhibitors. In migrating astrocytes, forms a cytoplasmic complex with PARD6A and is recruited by CDC42 to function in the establishment of cell polarity along with the microtubule motor and dynein. In association with FEZ1, stimulates neuronal differentiation in PC12 cells. In the inflammatory response, is required for the T-helper 2 (Th2) differentiation process, including interleukin production, efficient activation of JAK1 and the subsequent phosphorylation and nuclear translocation of STAT6. May be involved in development of allergic airway inflammation (asthma), a process dependent on Th2 immune response. In the NF-kappa-B-mediated inflammatory response, can relieve SETD6-dependent repression of NF-kappa-B target genes by phosphorylating the RELA subunit at 'Ser-311'. Phosphorylates VAMP2 in vitro. Phosphorylates and activates LRRK1, which phosphorylates RAB proteins involved in intracellular trafficking. Its function is as follows. Involved in late synaptic long term potentiation phase in CA1 hippocampal cells and long term memory maintenance. This is Protein kinase C zeta type (Prkcz) from Mus musculus (Mouse).